The primary structure comprises 138 residues: Transcriptional activator protein (138 aa).

Low complexity predominate over residues 1 to 20 (MTGSKKTPSTSPSKKLSSPP). Positions 1-23 (MTGSKKTPSTSPSKKLSSPPEVK) are disordered. Positions 23–37 (KLRHRFAKRQIRRRR) match the Nuclear localization signal motif. A zinc finger lies at 42 to 59 (CGCSIYIHINCVNNGFTH). Residues 85–106 (NTASGDANVHTQPGISHSSQSK) are compositionally biased toward polar residues. A disordered region spans residues 85–123 (NTASGDANVHTQPGISHSSQSKPQHEDSVGSPQSLLQLP). The span at 113–123 (VGSPQSLLQLP) shows a compositional bias: low complexity. The segment at 124-138 (SLDDVDDDFWADLLK) is transactivation.

It belongs to the geminiviridae transcriptional activator protein family. In terms of assembly, monomer. Homodimer. Homooligomer. Self-interaction correlates with nuclear localization and efficient activation of transcription. Monomers suppress local silencing by interacting with and inactivating host adenosine kinase 2 (ADK2) in the cytoplasm. Interacts with and inhibits host SNF1 kinase. Binds to ssDNA. Phosphorylated.

It is found in the host nucleus. Its subcellular location is the host cytoplasm. In terms of biological role, strong activator of the late viral genes promoters. Enhances the expression of the capsid protein and nuclear shuttle protein. Acts as a suppressor of RNA-mediated gene silencing, also known as post-transcriptional gene silencing (PTGS), a mechanism of plant viral defense that limits the accumulation of viral RNAs. Suppresses the host RNA silencing by inhibiting adenosine kinase 2 (ADK2), a kinase involved in a general methylation pathway. Also suppresses the host basal defense by interacting with and inhibiting SNF1 kinase, a key regulator of cell metabolism implicated in innate antiviral defense. Determines pathogenicity. In Pepper huasteco yellow vein virus (PHYVV), this protein is Transcriptional activator protein.